A 534-amino-acid chain; its full sequence is Peptide chain release factor 3 (534 aa).

A tr-type G domain is found at S9–Q278. GTP contacts are provided by residues S18–T25, D86–H90, and N140–D143.

It belongs to the TRAFAC class translation factor GTPase superfamily. Classic translation factor GTPase family. PrfC subfamily.

The protein localises to the cytoplasm. Functionally, increases the formation of ribosomal termination complexes and stimulates activities of RF-1 and RF-2. It binds guanine nucleotides and has strong preference for UGA stop codons. It may interact directly with the ribosome. The stimulation of RF-1 and RF-2 is significantly reduced by GTP and GDP, but not by GMP. This Stenotrophomonas maltophilia (strain R551-3) protein is Peptide chain release factor 3.